Consider the following 191-residue polypeptide: Prostaglandin-H2 D-isomerase (191 aa).

An N-terminal signal peptide occupies residues 1 to 28; that stretch reads MATPNRLWMALLLLGVLGVLQTPAPAQA. N51 carries an N-linked (GlcNAc...) asparagine glycan. C65 functions as the Nucleophile in the catalytic mechanism. N78 carries N-linked (GlcNAc...) asparagine glycosylation. A disulfide bridge links C89 with C186.

It belongs to the calycin superfamily. Lipocalin family. Monomer. In terms of tissue distribution, in the male reproductive system, expressed in the testis, epididymis and prostate, and secreted into the seminal fluid.

Its subcellular location is the rough endoplasmic reticulum. The protein localises to the nucleus membrane. It localises to the golgi apparatus. It is found in the cytoplasm. The protein resides in the perinuclear region. Its subcellular location is the secreted. It carries out the reaction prostaglandin H2 = prostaglandin D2. Its function is as follows. Catalyzes the conversion of PGH2 to PGD2, a prostaglandin involved in smooth muscle contraction/relaxation and a potent inhibitor of platelet aggregation. Involved in a variety of CNS functions, such as sedation, NREM sleep and PGE2-induced allodynia, and may have an anti-apoptotic role in oligodendrocytes. Binds small non-substrate lipophilic molecules, including biliverdin, bilirubin, retinal, retinoic acid and thyroid hormone, and may act as a scavenger for harmful hydrophobic molecules and as a secretory retinoid and thyroid hormone transporter. Possibly involved in development and maintenance of the blood-brain, blood-retina, blood-aqueous humor and blood-testis barrier. It is likely to play important roles in both maturation and maintenance of the central nervous system and male reproductive system. Involved in PLA2G3-dependent maturation of mast cells. PLA2G3 is secreted by immature mast cells and acts on nearby fibroblasts upstream to PTDGS to synthesize PGD2, which in turn promotes mast cell maturation and degranulation via PTGDR. The polypeptide is Prostaglandin-H2 D-isomerase (PTGDS) (Bos taurus (Bovine)).